Consider the following 269-residue polypeptide: Undecaprenyl-diphosphatase (269 aa).

Helical transmembrane passes span M1–I21, G40–F59, F87–I107, L117–P137, L147–S166, F188–L208, P220–L240, and L248–A268.

Belongs to the UppP family.

It is found in the cell inner membrane. It carries out the reaction di-trans,octa-cis-undecaprenyl diphosphate + H2O = di-trans,octa-cis-undecaprenyl phosphate + phosphate + H(+). In terms of biological role, catalyzes the dephosphorylation of undecaprenyl diphosphate (UPP). Confers resistance to bacitracin. This Geobacter sulfurreducens (strain ATCC 51573 / DSM 12127 / PCA) protein is Undecaprenyl-diphosphatase.